We begin with the raw amino-acid sequence, 361 residues long: UDP-N-acetylglucosamine--N-acetylmuramyl-(pentapeptide) pyrophosphoryl-undecaprenol N-acetylglucosamine transferase (361 aa).

Positions 199 and 290 each coordinate UDP-N-acetyl-alpha-D-glucosamine.

This sequence belongs to the glycosyltransferase 28 family. MurG subfamily.

It is found in the cell membrane. The catalysed reaction is Mur2Ac(oyl-L-Ala-gamma-D-Glu-L-Lys-D-Ala-D-Ala)-di-trans,octa-cis-undecaprenyl diphosphate + UDP-N-acetyl-alpha-D-glucosamine = beta-D-GlcNAc-(1-&gt;4)-Mur2Ac(oyl-L-Ala-gamma-D-Glu-L-Lys-D-Ala-D-Ala)-di-trans,octa-cis-undecaprenyl diphosphate + UDP + H(+). Its pathway is cell wall biogenesis; peptidoglycan biosynthesis. Its function is as follows. Cell wall formation. Catalyzes the transfer of a GlcNAc subunit on undecaprenyl-pyrophosphoryl-MurNAc-pentapeptide (lipid intermediate I) to form undecaprenyl-pyrophosphoryl-MurNAc-(pentapeptide)GlcNAc (lipid intermediate II). The protein is UDP-N-acetylglucosamine--N-acetylmuramyl-(pentapeptide) pyrophosphoryl-undecaprenol N-acetylglucosamine transferase of Streptococcus mutans serotype c (strain ATCC 700610 / UA159).